The chain runs to 203 residues: MKLRWFAFLVVLLAGCSSKQDYKNPPWNAEVPVKRAMQWMPISEKAGEAWGVSPRLITAIIAIESGGNPTVVSKSGAVGLMQLKASTSGRDVYRHMGWSGEPSTSELKNPERNISMGTAYLSILEHGSLAGINDPQVMQYALVVSYANGAGALLRTFSSDRKKAIEKINDLSADEFFEHVAKNHPAPQAPRYIWKLQQALDAM.

An N-terminal signal peptide occupies residues 1 to 15 (MKLRWFAFLVVLLAG). A lipid anchor (N-palmitoyl cysteine) is attached at C16. A lipid anchor (S-diacylglycerol cysteine) is attached at C16.

It belongs to the transglycosylase Slt family.

The protein localises to the cell outer membrane. The catalysed reaction is Endolytic cleavage of the (1-&gt;4)-beta-glycosidic linkage between N-acetylmuramic acid (MurNAc) and N-acetylglucosamine (GlcNAc) residues in peptidoglycan with concomitant formation of a 1,6-anhydrobond in the MurNAc residue.. Functionally, murein-degrading enzyme. May play a role in recycling of muropeptides during cell elongation and/or cell division. Preferentially cleaves at a distance of more than two disaccharide units from the ends of the glycan chain. This Citrobacter koseri (strain ATCC BAA-895 / CDC 4225-83 / SGSC4696) protein is Endo-type membrane-bound lytic murein transglycosylase A.